A 183-amino-acid polypeptide reads, in one-letter code: Translocon-associated protein subunit beta (183 aa).

The first 17 residues, 1–17 (MRLLAFAVLALFAVTQA), serve as a signal peptide directing secretion. The Lumenal segment spans residues 18 to 146 (EEGARLLASK…REFDRRFSPH (129 aa)). A glycan (N-linked (GlcNAc...) asparagine) is linked at N88. A helical transmembrane segment spans residues 147-167 (FLDWAAFGVMTLPSIGVPLLL). Topologically, residues 168 to 183 (WYSSKRKYDTPKTKKN) are cytoplasmic.

It belongs to the TRAP-beta family. In terms of assembly, heterotetramer of TRAP-alpha, TRAP-beta, TRAP-delta and TRAP-gamma. Interacts with STING1.

Its subcellular location is the endoplasmic reticulum membrane. Functionally, TRAP proteins are part of a complex whose function is to bind calcium to the ER membrane and thereby regulate the retention of ER resident proteins. This chain is Translocon-associated protein subunit beta (SSR2), found in Bos taurus (Bovine).